Here is a 152-residue protein sequence, read N- to C-terminus: Small ribosomal subunit protein uS19 (152 aa).

This sequence belongs to the universal ribosomal protein uS19 family.

Protein S19 forms a complex with S13 that binds strongly to the 16S ribosomal RNA. In Methanocaldococcus jannaschii (strain ATCC 43067 / DSM 2661 / JAL-1 / JCM 10045 / NBRC 100440) (Methanococcus jannaschii), this protein is Small ribosomal subunit protein uS19 (rps19).